The chain runs to 84 residues: Large ribosomal subunit protein bL27 (84 aa).

The interval Met1–Arg25 is disordered.

The protein belongs to the bacterial ribosomal protein bL27 family.

The chain is Large ribosomal subunit protein bL27 from Desulfatibacillum aliphaticivorans.